The following is a 331-amino-acid chain: MKVGINGFGRIGRQVFRILHSRGVEVALINDLTDNKTLAHLLKYDSIYHRFPGEVAYDDQYLYVDGKAIRATAVKDPKEIPWAEAGVGVVIESTGVFTDADKAKAHLEGGAKKVIITAPAKGEDITIVMGVNHEAYDPSRHHIISNASCTTNSLAPVMKVLEEAFGVEKALMTTVHSYTNDQRLLDLPHKDLRRARAAAINIIPTTTGAAKATALVLPSLKGRFDGMALRVPTATGSISDITALLKREVTAEEVNAALKAAAEGPLKGILAYTEDEIVLQDIVMDPHSSIVDAKLTKALGNMVKVFAWYDNEWGYANRVADLVELVLRKGV.

NAD(+)-binding positions include 10 to 11 (RI), aspartate 31, lysine 75, and threonine 117. D-glyceraldehyde 3-phosphate is bound by residues 148-150 (SCT) and threonine 179. Residue cysteine 149 is the Nucleophile of the active site. NAD(+) is bound at residue asparagine 180. Residues arginine 194, 207 to 208 (TG), and arginine 230 contribute to the D-glyceraldehyde 3-phosphate site. Asparagine 311 lines the NAD(+) pocket.

Belongs to the glyceraldehyde-3-phosphate dehydrogenase family. In terms of assembly, homotetramer.

The protein resides in the cytoplasm. It catalyses the reaction D-glyceraldehyde 3-phosphate + phosphate + NAD(+) = (2R)-3-phospho-glyceroyl phosphate + NADH + H(+). Its pathway is carbohydrate degradation; glycolysis; pyruvate from D-glyceraldehyde 3-phosphate: step 1/5. In terms of biological role, catalyzes the oxidative phosphorylation of glyceraldehyde 3-phosphate (G3P) to 1,3-bisphosphoglycerate (BPG) using the cofactor NAD. The first reaction step involves the formation of a hemiacetal intermediate between G3P and a cysteine residue, and this hemiacetal intermediate is then oxidized to a thioester, with concomitant reduction of NAD to NADH. The reduced NADH is then exchanged with the second NAD, and the thioester is attacked by a nucleophilic inorganic phosphate to produce BPG. The chain is Glyceraldehyde-3-phosphate dehydrogenase (gap) from Thermus aquaticus.